The primary structure comprises 626 residues: Chaperone protein HtpG (626 aa).

The segment at 1 to 339 is a; substrate-binding; sequence MSQNQETRGF…SNDLPLNVSR (339 aa). The interval 340-555 is b; the sequence is EILQDNKITA…NDQMTTQMAK (216 aa). The c stretch occupies residues 556–626; that stretch reads LFAAAGQPVP…FIKRINKLLG (71 aa).

The protein belongs to the heat shock protein 90 family. As to quaternary structure, homodimer.

The protein resides in the cytoplasm. Its function is as follows. Molecular chaperone. Has ATPase activity. The protein is Chaperone protein HtpG of Haemophilus influenzae (strain PittGG).